Consider the following 807-residue polypeptide: MSRPIEIANVSSGNRRTLPALHGSSFSSRSELDNNTNSKISRRLRELVCQRMGENPLRLRQSFHETISNDSYGNSEKLVIRPCICCNSVLRYPAQAMCFRCSLCMTVNDVYFCLSGSQIKTKASTDGSQFISVEHFVETIHQTRSALQLAKQRTGNVQAIVAAGLPLRELISLVFGSPPILNKLFSVKNGCSIQSSGLNYKLIYQLYHDITNLDILITNELLRAIESLLRRPMLYCHDPADYQYLLILLENPLLNSKSKNIVNKSSSILKRILGVLSNLNEKTHHFFISCFKKQPYNNPKFFRRKVDLINKFIGQRLMETYSRNKRKHYYNNDWQIKSAAITMALLYSANSQMRLIDRSSFYCIMADFINLYHDFELWEQKINCFCFCQYPFLLSMGAKISILQLDARRKMEIKAREAFFSSILSKMNVEPYLMIRVRRDRLLEDSLRQINDRNKDFRKALKVEFLGEEGIDAGGLKREWLLLLTRKVFSPEFGLFVNCEESSNYLWFNYSHRSKEIDYYHMSGILMGIAIHNSINLDVQMPRAFYKKLLQLPLSFNDLDDFQPSLYRGLKELLLFEGDVKNTYGLNFTINLKAVEGFRTVELKEGGSELSVDNENRKEYVLRYVDYLLNTTVKKQFSAFFDGFMKVCGGNAISLFQDNEISKLIRGSEEVIDWELLKNVCVYDFYDQNAISNSISESEPSMTASKYLCHSFVSKRKIILWFWDLISHYSLKMQKLFLIFVTGSDRIPATGAHNFQLRISVLGPDSDQLPISHTCFNHLCIWEYSSREKLKKKLDTALLETNGFNIR.

An HECT domain is found at 453-807; that stretch reads RNKDFRKALK…LLETNGFNIR (355 aa). Residue Cys775 is the Glycyl thioester intermediate of the active site.

It localises to the cytoplasm. The protein resides in the cytoskeleton. It is found in the microtubule organizing center. The protein localises to the spindle pole body. It catalyses the reaction S-ubiquitinyl-[E2 ubiquitin-conjugating enzyme]-L-cysteine + [acceptor protein]-L-lysine = [E2 ubiquitin-conjugating enzyme]-L-cysteine + N(6)-ubiquitinyl-[acceptor protein]-L-lysine.. It participates in protein modification; protein ubiquitination. Its function is as follows. Probable E3 ubiquitin-protein ligase. Has a role in meiosis. The sequence is that of Probable E3 ubiquitin-protein ligase mug30 (mug30) from Schizosaccharomyces pombe (strain 972 / ATCC 24843) (Fission yeast).